We begin with the raw amino-acid sequence, 245 residues long: Putative MSV199 domain-containing protein 146R (245 aa).

The GIY-YIG domain occupies 2–97 (RKGYIYVIEN…NTLHGKLKNL (96 aa)).

This chain is Putative MSV199 domain-containing protein 146R, found in Acheta domesticus (House cricket).